The sequence spans 196 residues: Imidazole glycerol phosphate synthase subunit HisH (196 aa).

Residues 2–196 enclose the Glutamine amidotransferase type-1 domain; the sequence is NVVIVDTECA…LKRFLELTLC (195 aa). The Nucleophile role is filled by Cys77. Residues His175 and Glu177 contribute to the active site.

In terms of assembly, heterodimer of HisH and HisF.

It localises to the cytoplasm. It carries out the reaction 5-[(5-phospho-1-deoxy-D-ribulos-1-ylimino)methylamino]-1-(5-phospho-beta-D-ribosyl)imidazole-4-carboxamide + L-glutamine = D-erythro-1-(imidazol-4-yl)glycerol 3-phosphate + 5-amino-1-(5-phospho-beta-D-ribosyl)imidazole-4-carboxamide + L-glutamate + H(+). The catalysed reaction is L-glutamine + H2O = L-glutamate + NH4(+). The protein operates within amino-acid biosynthesis; L-histidine biosynthesis; L-histidine from 5-phospho-alpha-D-ribose 1-diphosphate: step 5/9. Its function is as follows. IGPS catalyzes the conversion of PRFAR and glutamine to IGP, AICAR and glutamate. The HisH subunit catalyzes the hydrolysis of glutamine to glutamate and ammonia as part of the synthesis of IGP and AICAR. The resulting ammonia molecule is channeled to the active site of HisF. This chain is Imidazole glycerol phosphate synthase subunit HisH, found in Idiomarina loihiensis (strain ATCC BAA-735 / DSM 15497 / L2-TR).